We begin with the raw amino-acid sequence, 923 residues long: Progesterone receptor (923 aa).

The span at 1 to 11 (MTELQAKDPRT) shows a compositional bias: basic and acidic residues. Positions 1–49 (MTELQAKDPRTLHTSGAAPSPTHVGSPLLARLDPDPFQGSQHSDASSVV) are disordered. Positions 1–164 (MTELQAKDPR…PATKGLLSPL (164 aa)) are AF3; mediates transcriptional activation (in isoform B). The interval 1–556 (MTELQAKDPR…YGFDSLPQKI (556 aa)) is modulating, Pro-Rich. A Glycyl lysine isopeptide (Lys-Gly) (interchain with G-Cter in SUMO) cross-link involves residue lysine 7. Serine 20 is modified (phosphoserine). A compositionally biased stretch (polar residues) spans 38 to 49 (QGSQHSDASSVV). The short motif at 56–60 (LDRLL) is the LXXL motif 1 element. Residues 67-111 (AQELPDEKTQNQQSLSDVEGAFSGVEASRRRSRNPRAPEKDSRLL) are disordered. Serine 82 is modified (phosphoserine). Residues 115–119 (LDTLL) carry the LXXL motif 2 motif. Residues serine 130 and serine 162 each carry the phosphoserine modification. The interval 152 to 239 (RSVPATKGLL…EGSAGPLLKS (88 aa)) is disordered. Positions 165–304 (MSRPESKAGD…LATTVVDFIH (140 aa)) are mediates transcriptional transrepression (in isoform A). Residues 184 to 188 (VLPKA) carry the Nuclear localization signal motif. Phosphoserine is present on residues serine 190 and serine 213. The residue at position 293 (serine 293) is a Phosphoserine; by MAPK1. The disordered stretch occupies residues 333 to 371 (AAQVPFAPPRGSPSAPSPPVPCGDFPDCTYPPEGDPKED). Pro residues predominate over residues 338 to 353 (FAPPRGSPSAPSPPVP). Serine 344 is subject to Phosphoserine; by MAPK. Lysine 387 is covalently cross-linked (Glycyl lysine isopeptide (Lys-Gly) (interchain with G-Cter in SUMO); alternate). Lysine 387 is covalently cross-linked (Glycyl lysine isopeptide (Lys-Gly) (interchain with G-Cter in ubiquitin); alternate). A Phosphoserine; by CDK2 modification is found at serine 399. The disordered stretch occupies residues 412 to 435 (TFPDFPLPPRPPRAPPSRPGEAAV). The span at 416-429 (FPLPPRPPRAPPSR) shows a compositional bias: pro residues. The segment at 450 to 536 (SALECILYKA…VYPPYLNYLR (87 aa)) is AF1; mediates transcriptional activation. Lysine 521 participates in a covalent cross-link: Glycyl lysine isopeptide (Lys-Gly) (interchain with G-Cter in SUMO). NR C4-type zinc fingers lie at residues 557–577 (CLIC…CGSC) and 593–617 (CAGR…LRKC). The nuclear receptor DNA-binding region spans 557–629 (CLICGDEASG…AGMVLGGRKF (73 aa)). Serine 666 is modified (phosphoserine). The NR LBD domain occupies 669–903 (QEIQLVPPLI…EFPEMMSEVI (235 aa)). The interval 677 to 923 (LINLLMSIEP…MVKPLLFHKK (247 aa)) is AF2; mediates transcriptional activation. Arginine 756 contributes to the progesterone binding site.

This sequence belongs to the nuclear hormone receptor family. NR3 subfamily. In terms of assembly, interacts with SMARD1 and UNC45A. Interacts with CUEDC2; the interaction promotes ubiquitination, decreases sumoylation, and represses transcriptional activity. Interacts with PIAS3; the interaction promotes sumoylation of PR in a hormone-dependent manner, inhibits DNA-binding, and alters nuclear export. Interacts with SP1; the interaction requires ligand-induced phosphorylation on Ser-344. Interacts with PRMT2. Isoform A interacts with NCOR2. Isoform B (but not isoform A) interacts with NCOA2 and NCOA1. Isoform B (but not isoform A) interacts with KLF9. Interacts with GTF2B. Post-translationally, phosphorylated on multiple serine sites. Several of these sites are hormone-dependent. Phosphorylation on Ser-293 is highly hormone-dependent and modulates ubiquitination and sumoylation on Lys-387. Phosphorylation on Ser-344 also requires induction by hormone. Basal phosphorylation on Ser-82, Ser-190 and Ser-399 is increased in response to progesterone and can be phosphorylated in vitro by the CDK2-A1 complex. Increased levels of phosphorylation on Ser-399 also in the presence of EGF, heregulin, IGF, PMA and FBS. Phosphorylation at this site by CDK2 is ligand-independent, and increases nuclear translocation and transcriptional activity. Phosphorylation at Ser-293, but not at Ser-190, is impaired during the G(2)/M phase of the cell cycle. Phosphorylation on Ser-344 by ERK1/2 MAPK is required for interaction with SP1. Sumoylation is hormone-dependent and represses transcriptional activity. Sumoylation on all three sites is enhanced by PIAS3. Desumoylated by SENP1. Sumoylation on Lys-387, the main site of sumoylation, is repressed by ubiquitination on the same site, and modulated by phosphorylation at Ser-293. In terms of processing, ubiquitination is hormone-dependent and represses sumoylation on the same site. Promoted by MAPK-mediated phosphorylation on Ser-293. Ubiquitinated by UBR5, leading to its degradation: UBR5 specifically recognizes and binds ligand-bound PGR when it is not associated with coactivators (NCOAs). In presence of NCOAs, the UBR5-degron is not accessible, preventing its ubiquitination and degradation. Post-translationally, palmitoylated by ZDHHC7 and ZDHHC21. Palmitoylation is required for plasma membrane targeting and for rapid intracellular signaling via ERK and AKT kinases and cAMP generation. In terms of tissue distribution, isoform A and isoform B are expressed in the pituitary.

The protein localises to the nucleus. The protein resides in the cytoplasm. Functionally, the steroid hormones and their receptors are involved in the regulation of eukaryotic gene expression and affect cellular proliferation and differentiation in target tissues. Depending on the isoform, progesterone receptor functions as a transcriptional activator or repressor. Its function is as follows. Ligand-dependent transdominant repressor of steroid hormone receptor transcriptional activity including repression of its isoform B, MR and ER. Transrepressional activity may involve recruitment of corepressor NCOR2. Transcriptional activator of several progesteron-dependent promoters in a variety of cell types. Involved in activation of SRC-dependent MAPK signaling on hormone stimulation. The polypeptide is Progesterone receptor (Pgr) (Rattus norvegicus (Rat)).